The following is a 432-amino-acid chain: Nuclear pore complex-interacting protein family member B9 (432 aa).

Disordered stretches follow at residues 260–280 (RMGRQPPPPTQQHSITDNSLS) and 353–420 (SPLP…LRTR). The segment covering 270–280 (QQHSITDNSLS) has biased composition (polar residues). A compositionally biased stretch (basic and acidic residues) spans 374–402 (EVEKPPKPKRWRVDEVEQSPKPKRQREAE). The segment covering 408–420 (KPKRRRLSKLRTR) has biased composition (basic residues).

This sequence belongs to the NPIP family.

The sequence is that of Nuclear pore complex-interacting protein family member B9 (NPIPB9) from Homo sapiens (Human).